Reading from the N-terminus, the 328-residue chain is 17-beta-hydroxysteroid dehydrogenase type 1 (328 aa).

NADP(+) contacts are provided by residues 10 to 38 (GCSS…ATLR) and D66. A Phosphoserine; by PKA modification is found at S135. Residue S143 participates in substrate binding. Y156 (proton acceptor) is an active-site residue. Residue K160 coordinates NADP(+). Positions 291-328 (KAEAGAEAGGGAGPGAEDEAGRGAVGDPELGDPPAAPQ) are disordered.

The protein belongs to the short-chain dehydrogenases/reductases (SDR) family. As to quaternary structure, homodimer. Exists predominantly as a homodimer but also exits as monomer.

It localises to the cytoplasm. It catalyses the reaction 17beta-estradiol + NAD(+) = estrone + NADH + H(+). The catalysed reaction is 17beta-estradiol + NADP(+) = estrone + NADPH + H(+). It carries out the reaction testosterone + NADP(+) = androst-4-ene-3,17-dione + NADPH + H(+). Its pathway is steroid biosynthesis; estrogen biosynthesis. Functionally, favors the reduction of estrogens and androgens. Converts estrone (E1) to a more potent estrogen, 17beta-estradiol (E2). Also has 20-alpha-HSD activity. Uses preferentially NADH. The protein is 17-beta-hydroxysteroid dehydrogenase type 1 of Homo sapiens (Human).